A 181-amino-acid polypeptide reads, in one-letter code: Large ribosomal subunit protein uL5 (181 aa).

The protein belongs to the universal ribosomal protein uL5 family. Part of the 50S ribosomal subunit; part of the 5S rRNA/L5/L18/L25 subcomplex. Contacts the 5S rRNA and the P site tRNA. Forms a bridge to the 30S subunit in the 70S ribosome.

Its function is as follows. This is one of the proteins that bind and probably mediate the attachment of the 5S RNA into the large ribosomal subunit, where it forms part of the central protuberance. In the 70S ribosome it contacts protein S13 of the 30S subunit (bridge B1b), connecting the 2 subunits; this bridge is implicated in subunit movement. Contacts the P site tRNA; the 5S rRNA and some of its associated proteins might help stabilize positioning of ribosome-bound tRNAs. The protein is Large ribosomal subunit protein uL5 of Helicobacter pylori (strain ATCC 700392 / 26695) (Campylobacter pylori).